Reading from the N-terminus, the 308-residue chain is Carbamate kinase (308 aa).

Belongs to the carbamate kinase family.

It localises to the cytoplasm. The catalysed reaction is hydrogencarbonate + NH4(+) + ATP = carbamoyl phosphate + ADP + H2O + H(+). This Synechocystis sp. (strain ATCC 27184 / PCC 6803 / Kazusa) protein is Carbamate kinase.